Consider the following 495-residue polypeptide: Lysine--tRNA ligase (495 aa).

Mg(2+)-binding residues include E406 and E413.

Belongs to the class-II aminoacyl-tRNA synthetase family. As to quaternary structure, homodimer. It depends on Mg(2+) as a cofactor.

Its subcellular location is the cytoplasm. The enzyme catalyses tRNA(Lys) + L-lysine + ATP = L-lysyl-tRNA(Lys) + AMP + diphosphate. This is Lysine--tRNA ligase from Staphylococcus aureus (strain MRSA252).